The sequence spans 86 residues: Beta-toxin CsEI (86 aa).

Residues 1–19 form the signal peptide; sequence MNSLLMITACLVLIGTVWA. An LCN-type CS-alpha/beta domain is found at 20-84; that stretch reads KDGYLVEKTG…TWPLPNKTCG (65 aa). Disulfide bonds link Cys30–Cys83, Cys34–Cys59, Cys43–Cys64, and Cys47–Cys66. Cys83 is modified (cysteine amide).

The protein belongs to the long (4 C-C) scorpion toxin superfamily. Sodium channel inhibitor family. Beta subfamily. In terms of tissue distribution, expressed by the venom gland.

It is found in the secreted. In terms of biological role, beta toxins bind voltage-independently at site-4 of sodium channels (Nav) and shift the voltage of activation toward more negative potentials thereby affecting sodium channel activation and promoting spontaneous and repetitive firing. Affects channels from chicken and frog. The polypeptide is Beta-toxin CsEI (Centruroides sculpturatus (Arizona bark scorpion)).